A 94-amino-acid chain; its full sequence is Co-chaperonin GroES (94 aa).

The protein belongs to the GroES chaperonin family. As to quaternary structure, heptamer of 7 subunits arranged in a ring. Interacts with the chaperonin GroEL.

Its subcellular location is the cytoplasm. Together with the chaperonin GroEL, plays an essential role in assisting protein folding. The GroEL-GroES system forms a nano-cage that allows encapsulation of the non-native substrate proteins and provides a physical environment optimized to promote and accelerate protein folding. GroES binds to the apical surface of the GroEL ring, thereby capping the opening of the GroEL channel. The chain is Co-chaperonin GroES from Streptococcus pneumoniae (strain CGSP14).